A 204-amino-acid polypeptide reads, in one-letter code: Putative AgrB-like protein (204 aa).

Transmembrane regions (helical) follow at residues 52–74, 87–107, 111–131, 151–168, and 173–190; these read YGIA…YLWL, LNCT…FQNI, NWIV…FAPA, AMIG…IPFA, and LIMV…PLTY.

Belongs to the AgrB family.

The protein localises to the cell membrane. In terms of biological role, may be involved in the proteolytic processing of a quorum sensing system signal molecule precursor. The sequence is that of Putative AgrB-like protein from Listeria monocytogenes serovar 1/2a (strain ATCC BAA-679 / EGD-e).